The primary structure comprises 235 residues: MPKLSKRITGLLAKVEDRVYQPLEAIQLVKENATAKFDETIEAHVRLGIDPKYTDQQLRTTVALPQGTGQSVRIAVISRGEKLAEAKTAGAELAGDDDLVESIGKGQMDFDLLIATPDMMPKVAKLGRVLGPRGLMPNPKAGTVTTDLAAAIKEFKAGKLEFRADRAGIVHVRFGKASFSADALLENLKTLQETIDRNKPSGAKGRYWKSLYITSTMGPSVEVDVTALQDLEEDA.

It belongs to the universal ribosomal protein uL1 family. Part of the 50S ribosomal subunit.

Its function is as follows. Binds directly to 23S rRNA. The L1 stalk is quite mobile in the ribosome, and is involved in E site tRNA release. Functionally, protein L1 is also a translational repressor protein, it controls the translation of the L11 operon by binding to its mRNA. The chain is Large ribosomal subunit protein uL1 from Prochlorococcus marinus (strain MIT 9313).